We begin with the raw amino-acid sequence, 294 residues long: Eukaryotic translation initiation factor 3 subunit G (294 aa).

Over residues 1–22 the composition is skewed to basic and acidic residues; sequence MQTFHHQDTGSEDFRQNTMDEK. 2 disordered regions span residues 1–42 and 164–211; these read MQTF…DGTK and GGMG…SDDD. Residues 30-42 show a composition bias toward polar residues; it reads STPQITQNADGTK. Over residues 193-205 the composition is skewed to gly residues; that stretch reads GPGGPGGPGGAAG. One can recognise an RRM domain in the interval 214 to 292; sequence LTLRVTNLSE…LIMKVDYSKK (79 aa).

This sequence belongs to the eIF-3 subunit G family. As to quaternary structure, component of the eukaryotic translation initiation factor 3 (eIF-3) complex.

The protein resides in the cytoplasm. Its function is as follows. RNA-binding component of the eukaryotic translation initiation factor 3 (eIF-3) complex, which is involved in protein synthesis of a specialized repertoire of mRNAs and, together with other initiation factors, stimulates binding of mRNA and methionyl-tRNAi to the 40S ribosome. The eIF-3 complex specifically targets and initiates translation of a subset of mRNAs involved in cell proliferation. This subunit can bind 18S rRNA. The chain is Eukaryotic translation initiation factor 3 subunit G from Yarrowia lipolytica (strain CLIB 122 / E 150) (Yeast).